Reading from the N-terminus, the 141-residue chain is Lutropin subunit beta (141 aa).

The signal sequence occupies residues 1–20; sequence MEMLQGLLLWLLLSMGGARA. Intrachain disulfides connect Cys-29–Cys-77, Cys-43–Cys-92, Cys-46–Cys-130, Cys-54–Cys-108, Cys-58–Cys-110, and Cys-113–Cys-120. N-linked (GlcNAc...) asparagine glycosylation is found at Asn-33 and Asn-50.

The protein belongs to the glycoprotein hormones subunit beta family. In terms of assembly, heterodimer of a common alpha chain and a unique beta chain which confers biological specificity to thyrotropin, lutropin, follitropin and gonadotropin.

It is found in the secreted. Functionally, promotes spermatogenesis and ovulation by stimulating the testes and ovaries to synthesize steroids. This chain is Lutropin subunit beta (LHB), found in Macaca fascicularis (Crab-eating macaque).